We begin with the raw amino-acid sequence, 191 residues long: Scytalone dehydratase PfmaJ (191 aa).

Substrate-binding residues include Tyr-25, Tyr-45, and Phe-48. Residues His-80 and His-105 contribute to the active site. A substrate-binding site is contributed by Asn-126.

It belongs to the scytalone dehydratase family. Homotrimer. Each subunit contains an active site, located in the central part of the hydrophobic core of the monomer, which functions independently.

Its subcellular location is the endosome. The enzyme catalyses scytalone = 1,3,8-trihydroxynaphthalene + H2O. The protein operates within pigment biosynthesis; melanin biosynthesis. In terms of biological role, scytalone dehydratase involved the biosynthesis of dihydroxynaphthalene (DHN)-melanin, a bluish-green pigment forming a dark layer in the conidial wall that protects the conidia from UV radiations. The first step of the pathway is the production of the pentaketide 1,3,6,8-tetrahydroxynaphthalene (1,3,6,8-THN or T4HN) by the polyketide synthase PfmaE though condensation of acetyl-CoA with malonyl-CoA. T4HN is not stable and easily oxidizes into the stable form flaviolin. T4HN is also substrate of the hydroxynaphthalene reductase PfmaG to yield scytalone. The scytalone dehydratase PfmaJ then reduces scytalone to 1,3,8-THN. 1,3,8-THN is then substrate of the hydroxynaphthalene reductase PfmaI to yield vermelone. Vermelone is further converted by the multicopper oxidase PfmaD to 1,8-DHN. Finally the laccase PFICI_06862 transforms 1,8-DHN to DHN-melanin. The roles of the 5-oxoprolinase PfmaA and the proline iminopeptidase PfmaB within the cluster have not been elucidated yet. This is Scytalone dehydratase PfmaJ from Pestalotiopsis fici (strain W106-1 / CGMCC3.15140).